The chain runs to 107 residues: MNKKELFDAFDGFSQNLMVTLAEIEAMKKQVQSLVEENTILRLENTKLRERLSHLEHETVAKNPSKQRKDHLEGIYDEGFHICNFFYGQRRENDEECMFCRELLDRK.

Residues H81, C83, C97, and C100 each coordinate Zn(2+).

This sequence belongs to the YabA family. As to quaternary structure, homotetramer. Interacts with both DnaA and DnaN, acting as a bridge between these two proteins. Zn(2+) serves as cofactor.

The protein localises to the cytoplasm. It localises to the nucleoid. Involved in control of chromosome replication initiation. Inhibits the cooperative binding of DnaA to the oriC region, thus negatively regulating initiation of chromosome replication. Inhibits the ability of DnaA-ATP to form a helix on DNA; does not disassemble preformed DnaA-DNA helices. Decreases the residence time of DnaA on the chromosome at its binding sites (oriC, replication forks and promoter-binding sites). Tethers DnaA to the replication machinery via the DNA polymerase beta sliding clamp subunit (dnaN). Associates with oriC and other DnaA targets on the chromosome in a DnaA-dependent manner. This is Replication initiation control protein YabA from Streptococcus pyogenes serotype M1.